The chain runs to 50 residues: Protein HokA (50 aa).

A helical transmembrane segment spans residues 7-24 (LLSLIVICFTLLFFTWMI).

Belongs to the Hok/Gef family.

Its subcellular location is the cell inner membrane. Functionally, toxic component of a type I toxin-antitoxin (TA) system. When overexpressed kills cells within minutes; causes collapse of the transmembrane potential and arrest of respiration. Its toxic effect is probably neutralized by antisense antitoxin RNA SokA. The polypeptide is Protein HokA (Escherichia coli (strain K12)).